A 662-amino-acid polypeptide reads, in one-letter code: Interleukin-12 receptor subunit beta-1 (662 aa).

A signal peptide spans 1–23 (MEPLVTWVVPLLFLFLLSRQGAA). At 24-545 (CRTSECCFQD…RFSIEVQVSD (522 aa)) the chain is on the extracellular side. Fibronectin type-III domains follow at residues 46–136 (GPRD…LYNS), 142–234 (PLGD…VPPE), 237–337 (PQPQ…IPAD), 338–444 (THTE…GNAS), and 448–542 (TPHH…IEVQ). An intrachain disulfide couples Cys-52 to Cys-62. Asn-121 is a glycosylation site (N-linked (GlcNAc...) asparagine). Positions 222 to 226 (WSKWS) match the WSXWS motif motif. Asn-329, Asn-346, Asn-352, Asn-442, and Asn-456 each carry an N-linked (GlcNAc...) asparagine glycan. A helical transmembrane segment spans residues 546–570 (WLIFFASLGSFLSILLVGVLGYLGL). Residues 571–662 (NRAARHLCPP…EDGDRCKAKM (92 aa)) lie on the Cytoplasmic side of the membrane. The Box 1 motif motif lies at 577–585 (LCPPLPTPC). Residues 626–637 (GERTEPLEKTEL) are compositionally biased toward basic and acidic residues. Residues 626-648 (GERTEPLEKTELPEGAPELALDT) are disordered.

It belongs to the type I cytokine receptor family. Type 2 subfamily. As to quaternary structure, dimer or oligomer; disulfide-linked. Interacts with IL12RB2 to form the high affinity IL12 receptor. Heterodimer with IL23R; in presence of IL23. The heterodimer forms the IL23 receptor.

The protein localises to the membrane. In terms of biological role, functions as an interleukin receptor which binds interleukin-12 with low affinity and is involved in IL12 transduction. Associated with IL12RB2 it forms a functional, high affinity receptor for IL12. Also associates with IL23R to form the interleukin-23 receptor which functions in IL23 signal transduction probably through activation of the Jak-Stat signaling cascade. This Homo sapiens (Human) protein is Interleukin-12 receptor subunit beta-1 (IL12RB1).